The following is a 936-amino-acid chain: VPS35 endosomal protein-sorting factor-like (936 aa).

Disordered regions lie at residues 43 to 69 (SKTK…VDPL) and 87 to 113 (DPAA…VGPD). A compositionally biased stretch (low complexity) spans 51-69 (KGSTSSTSSSSSSSVVDPL). Ser265 is modified (phosphoserine). The helical transmembrane segment at 672–692 (AFVRACVAYCFITIPSLVGIF) threads the bilayer.

The protein belongs to the VPS35L family. In terms of assembly, component of the heterotrimeric retriever complex formed by VPS26C, VPS29 and VPS35L. Interacts with VPS29. Interacts with COMMD1, CCDC93 and CCDC22; associates with the CCC (COMMD/CCDC22/CCDC93) complex which contains at least COMMD1 (and possibly other COMM domain-containing proteins), CCDC22 and CCDC93. Interacts with WASHC1, WASHC2A and WASHC2C. Interacts with SNX17 and SNX31.

It is found in the membrane. The protein localises to the endosome. Functionally, acts as a component of the retriever complex. The retriever complex is a heterotrimeric complex related to retromer cargo-selective complex (CSC) and essential for retromer-independent retrieval and recycling of numerous cargos such as integrin alpha-5/beta-1 (ITGA5:ITGB1). The recruitment of the retriever complex to the endosomal membrane involves CCC and WASH complexes. In the endosomes, drives the retrieval and recycling of NxxY-motif-containing cargo proteins by coupling to SNX17, a cargo essential for the homeostatic maintenance of numerous cell surface proteins associated with processes that include cell migration, cell adhesion, nutrient supply and cell signaling. Involved in copper-dependent ATP7A trafficking between the trans-Golgi network and vesicles in the cell periphery; the function is proposed to depend on its association with the CCC complex and cooperation with the WASH complex on early endosomes. Seems not to be required for CCC complex stability. This is VPS35 endosomal protein-sorting factor-like from Rattus norvegicus (Rat).